We begin with the raw amino-acid sequence, 172 residues long: NAD(P)H-quinone oxidoreductase subunit J (172 aa).

It belongs to the complex I 30 kDa subunit family. NDH-1 can be composed of about 15 different subunits; different subcomplexes with different compositions have been identified which probably have different functions.

The protein resides in the cellular thylakoid membrane. The catalysed reaction is a plastoquinone + NADH + (n+1) H(+)(in) = a plastoquinol + NAD(+) + n H(+)(out). The enzyme catalyses a plastoquinone + NADPH + (n+1) H(+)(in) = a plastoquinol + NADP(+) + n H(+)(out). In terms of biological role, NDH-1 shuttles electrons from an unknown electron donor, via FMN and iron-sulfur (Fe-S) centers, to quinones in the respiratory and/or the photosynthetic chain. The immediate electron acceptor for the enzyme in this species is believed to be plastoquinone. Couples the redox reaction to proton translocation, and thus conserves the redox energy in a proton gradient. Cyanobacterial NDH-1 also plays a role in inorganic carbon-concentration. This is NAD(P)H-quinone oxidoreductase subunit J from Synechococcus sp. (strain ATCC 27144 / PCC 6301 / SAUG 1402/1) (Anacystis nidulans).